The primary structure comprises 41 residues: Large ribosomal subunit protein bL36B (41 aa).

It belongs to the bacterial ribosomal protein bL36 family.

This Neisseria meningitidis serogroup C (strain 053442) protein is Large ribosomal subunit protein bL36B.